The sequence spans 128 residues: Cytochrome c-type biogenesis protein CcmE (128 aa).

Over 1–8 the chain is Cytoplasmic; the sequence is MQKIVRNR. Residues 9-29 traverse the membrane as a helical; Signal-anchor for type II membrane protein segment; the sequence is LIKIIICFCSACLGISIILYN. Residues 30–128 are Periplasmic-facing; the sequence is LEKNIIFFFP…KHDENYRPPS (99 aa). Heme-binding residues include H120 and Y124.

This sequence belongs to the CcmE/CycJ family.

It localises to the cell inner membrane. In terms of biological role, heme chaperone required for the biogenesis of c-type cytochromes. Transiently binds heme delivered by CcmC and transfers the heme to apo-cytochromes in a process facilitated by CcmF and CcmH. This is Cytochrome c-type biogenesis protein CcmE from Rickettsia prowazekii (strain Madrid E).